Here is a 266-residue protein sequence, read N- to C-terminus: 22 kDa alpha-zein 8 (266 aa).

The signal sequence occupies residues 1-21 (MATKILALLALLALFVSATNA).

It belongs to the zein family.

Its function is as follows. Zeins are major seed storage proteins. The polypeptide is 22 kDa alpha-zein 8 (Zea mays (Maize)).